Here is an 870-residue protein sequence, read N- to C-terminus: Phycobiliprotein ApcE (870 aa).

(2R,3E)-phycocyanobilin is bound at residue Cys-184. PBS-linker domains are found at residues 241-421, 482-665, and 679-856; these read DLQG…FRTI, GAGI…KIEK, and SSLN…KQNR.

The protein belongs to the phycobilisome linker protein family. Post-translationally, contains one covalently linked bilin chromophore. This protein autochromophorylates (Potential).

Its subcellular location is the plastid. It is found in the chloroplast thylakoid membrane. This protein is postulated to act both as terminal energy acceptor and as a linker polypeptide that stabilizes the phycobilisome architecture. May have intrinsic bilin lyase activity. The polypeptide is Phycobiliprotein ApcE (apcE) (Cyanidium caldarium (Red alga)).